The sequence spans 801 residues: Phosphatidylinositol 4-kinase beta (801 aa).

Disordered regions lie at residues 1–29 (MGDTAVEPAPLKPASEPAPGPPGNNGGSL), 101–121 (EDEMGATVTSGTAKGARRRRQ), and 250–304 (RKRE…EDEP). At Gly-2 the chain carries N-acetylglycine. Positions 2–68 (GDTAVEPAPL…VRLLHGAVAV (67 aa)) are interaction with ACBD3. The PIK helical domain occupies 29–242 (LLSVITEGVG…GTKLRKLILS (214 aa)). Ser-258 is subject to Phosphoserine. A compositionally biased stretch (polar residues) spans 259–268 (PALNTGLSPS). Thr-263 is modified (phosphothreonine). Phosphoserine occurs at positions 266, 275, 277, 284, 294, and 413. Low complexity predominate over residues 278–294 (DATASISLSSSLKRTAS). Thr-423 bears the Phosphothreonine mark. Residue Ser-496 is modified to Phosphoserine. Residues Thr-502 and Thr-504 each carry the phosphothreonine modification. The PI3K/PI4K catalytic domain occupies 520–786 (EPWQEKVRRI…MVDGSMRSIT (267 aa)). Residues 526–532 (VRRIREG) form a G-loop region. The tract at residues 653–661 (QVKDRHNGN) is catalytic loop. The interval 672–696 (HIDFGFILSSSPRNLGFETSAFKLT) is activation loop.

It belongs to the PI3/PI4-kinase family. Type III PI4K subfamily. In terms of assembly, interacts with ARF1 and ARF3 in the Golgi complex, but not with ARF4, ARF5 or ARF6. Interacts with NCS1/FREQ in a calcium-independent manner. Interacts with CALN1/CABP8 and CALN2/CABP7; in a calcium-dependent manner; this interaction competes with NCS1/FREQ binding. Interacts with ACBD3. Interacts with ARMH3, YWHAB, YWHAE, YWHAG, YWHAH, YWHAQ, YWHAZ and SFN. Interacts with GGA2 (via VHS domain); the interaction is important for PI4KB location at the Golgi apparatus membrane. Interacts with ATG9A. The cofactor is Mg(2+). Requires Mn(2+) as cofactor.

It localises to the endomembrane system. Its subcellular location is the mitochondrion outer membrane. The protein resides in the rough endoplasmic reticulum membrane. It is found in the golgi apparatus. The protein localises to the golgi apparatus membrane. It catalyses the reaction a 1,2-diacyl-sn-glycero-3-phospho-(1D-myo-inositol) + ATP = a 1,2-diacyl-sn-glycero-3-phospho-(1D-myo-inositol 4-phosphate) + ADP + H(+). Its activity is regulated as follows. Inhibited by wortmannin. Increased kinase activity upon interaction with NCS1/FREQ. In terms of biological role, phosphorylates phosphatidylinositol (PI) in the first committed step in the production of the second messenger inositol-1,4,5,-trisphosphate (PIP). May regulate Golgi disintegration/reorganization during mitosis, possibly via its phosphorylation. Involved in Golgi-to-plasma membrane trafficking. May play an important role in the inner ear development. This is Phosphatidylinositol 4-kinase beta (PI4KB) from Sorex araneus (Eurasian common shrew).